Here is a 529-residue protein sequence, read N- to C-terminus: Peptide chain release factor 3 (529 aa).

The tr-type G domain maps to 11–280 (AKRRTFAIIS…GLVEWAPAPM (270 aa)). GTP-binding positions include 20 to 27 (SHPDAGKT), 88 to 92 (DTPGH), and 142 to 145 (NKLD).

Belongs to the TRAFAC class translation factor GTPase superfamily. Classic translation factor GTPase family. PrfC subfamily.

It is found in the cytoplasm. In terms of biological role, increases the formation of ribosomal termination complexes and stimulates activities of RF-1 and RF-2. It binds guanine nucleotides and has strong preference for UGA stop codons. It may interact directly with the ribosome. The stimulation of RF-1 and RF-2 is significantly reduced by GTP and GDP, but not by GMP. The sequence is that of Peptide chain release factor 3 from Klebsiella pneumoniae (strain 342).